Consider the following 412-residue polypeptide: Probable serine/threonine-protein kinase PBL10 (412 aa).

The N-myristoyl glycine moiety is linked to residue Gly2. The S-palmitoyl cysteine moiety is linked to residue Cys4. Residues Gly15–Glu45 form a disordered region. The span at Ser23–Arg43 shows a compositional bias: polar residues. The residue at position 58 (Thr58) is a Phosphothreonine. One can recognise a Protein kinase domain in the interval Phe69–Thr356. Residues Leu75–Val83 and Lys107 contribute to the ATP site. Tyr152 bears the Phosphotyrosine mark. Asp204 (proton acceptor) is an active-site residue. Residues Ser208 and Ser238 each carry the phosphoserine modification. Residues Thr239 and Thr244 each carry the phosphothreonine modification. Position 252 is a phosphotyrosine (Tyr252).

This sequence belongs to the protein kinase superfamily. Ser/Thr protein kinase family. Interacts with the Xanthomonas campestris effector XopAC/AvrAC. In terms of tissue distribution, expressed in stomatal guard cells of leaves.

The protein localises to the cell membrane. It catalyses the reaction L-seryl-[protein] + ATP = O-phospho-L-seryl-[protein] + ADP + H(+). The enzyme catalyses L-threonyl-[protein] + ATP = O-phospho-L-threonyl-[protein] + ADP + H(+). Possible bi-functional kinase. In vitro, it exhibits serine/threonine activity. In vivo, can phosphorylate tyrosine residues of limited substrates. May be involved in plant defense signaling. Required for full light-induced stomatal opening. This Arabidopsis thaliana (Mouse-ear cress) protein is Probable serine/threonine-protein kinase PBL10.